The chain runs to 88 residues: Hemotin (88 aa).

Over 1–14 (MDCFKVFEVVFQSE) the chain is Lumenal. A helical transmembrane segment spans residues 15–37 (INPLLLIPAVATIALTLCCYCYH). Topologically, residues 38–88 (GYQWIRDRRTARIEEQQAQLPLPLSRISITPGCSMVATTKLTHSRNSVDIY) are cytoplasmic.

Interacts with 14-3-3zeta. In terms of tissue distribution, expressed in hemocytes.

It is found in the early endosome membrane. In terms of biological role, negatively regulates early endosome maturation by binding to and repressing the activity of 14-3-3zeta which prevents the 14-3-3zeta-mediated activation of phosphoinositide 3-kinase Pi3K68D. This, in turn, inhibits the Pi3K68D-mediated conversion of phosphatidylinositol to phosphatidylinositol-3-phosphate and prevents progression of early endosomes through the maturation process which regulates subsequent steps of phagocytic processing. This chain is Hemotin, found in Drosophila melanogaster (Fruit fly).